Reading from the N-terminus, the 345-residue chain is N-acetyl-gamma-glutamyl-phosphate reductase (345 aa).

Cys-149 is a catalytic residue.

Belongs to the NAGSA dehydrogenase family. Type 1 subfamily.

It localises to the cytoplasm. The enzyme catalyses N-acetyl-L-glutamate 5-semialdehyde + phosphate + NADP(+) = N-acetyl-L-glutamyl 5-phosphate + NADPH + H(+). The protein operates within amino-acid biosynthesis; L-arginine biosynthesis; N(2)-acetyl-L-ornithine from L-glutamate: step 3/4. Functionally, catalyzes the NADPH-dependent reduction of N-acetyl-5-glutamyl phosphate to yield N-acetyl-L-glutamate 5-semialdehyde. The polypeptide is N-acetyl-gamma-glutamyl-phosphate reductase (Halalkalibacterium halodurans (strain ATCC BAA-125 / DSM 18197 / FERM 7344 / JCM 9153 / C-125) (Bacillus halodurans)).